We begin with the raw amino-acid sequence, 1279 residues long: ATP-dependent helicase/nuclease subunit A (1279 aa).

The region spanning 4–499 is the UvrD-like helicase ATP-binding domain; sequence TKWTDEQRQA…VKLFKNFRSR (496 aa). 25-32 provides a ligand contact to ATP; sequence AGAGAGKT. In terms of domain architecture, UvrD-like helicase C-terminal spans 526–853; it reads EEALKVGASY…RIMSIHKSKG (328 aa).

The protein belongs to the helicase family. AddA subfamily. Heterodimer of AddA and AddB/RexB. It depends on Mg(2+) as a cofactor.

The catalysed reaction is Couples ATP hydrolysis with the unwinding of duplex DNA by translocating in the 3'-5' direction.. It carries out the reaction ATP + H2O = ADP + phosphate + H(+). In terms of biological role, the heterodimer acts as both an ATP-dependent DNA helicase and an ATP-dependent, dual-direction single-stranded exonuclease. Recognizes the chi site generating a DNA molecule suitable for the initiation of homologous recombination. The AddA nuclease domain is required for chi fragment generation; this subunit has the helicase and 3' -&gt; 5' nuclease activities. The chain is ATP-dependent helicase/nuclease subunit A from Clostridium botulinum (strain ATCC 19397 / Type A).